Here is a 206-residue protein sequence, read N- to C-terminus: Small ribosomal subunit protein uS4 (206 aa).

The region spanning 96–156 (SRLDNVVYRM…EKSKNQLRIQ (61 aa)) is the S4 RNA-binding domain.

The protein belongs to the universal ribosomal protein uS4 family. As to quaternary structure, part of the 30S ribosomal subunit. Contacts protein S5. The interaction surface between S4 and S5 is involved in control of translational fidelity.

One of the primary rRNA binding proteins, it binds directly to 16S rRNA where it nucleates assembly of the body of the 30S subunit. In terms of biological role, with S5 and S12 plays an important role in translational accuracy. The chain is Small ribosomal subunit protein uS4 from Teredinibacter turnerae (strain ATCC 39867 / T7901).